A 134-amino-acid polypeptide reads, in one-letter code: Large ribosomal subunit protein uL18 (134 aa).

This sequence belongs to the universal ribosomal protein uL18 family. In terms of assembly, part of the 50S ribosomal subunit; part of the 5S rRNA/L5/L18/L25 subcomplex. Contacts the 5S and 23S rRNAs.

This is one of the proteins that bind and probably mediate the attachment of the 5S RNA into the large ribosomal subunit, where it forms part of the central protuberance. The chain is Large ribosomal subunit protein uL18 from Corynebacterium efficiens (strain DSM 44549 / YS-314 / AJ 12310 / JCM 11189 / NBRC 100395).